A 526-amino-acid polypeptide reads, in one-letter code: MSGYTVEVDKRRTFAIISHPDAGKTTITEKVLLFGQALQKAGTVKGKKSGQHAKSDWMEMEKDRGISITTSVMQFPYREALVNLLDTPGHEDFSEDTYRTLTAVDSCLMVIDSAKGVEQRTIKLMEVTRLRDTPIVTFMNKLDRDIRDPIELMDEVENILNIACAPITWPIGAGKEFKGVYHLLRDEVILYQNGMGHTIQDSRVIKGLDNPELDEAIGSYAQDLRDEMELVLGASHEFDLEAFLKGELTPVFFGTALGNFGVDHILDGIVEWAPRPQPRESDQRNVEPDESKFSGFVFKIQANMDPKHRDRVAFMRVCSGRYEQGMKMHHVRIGKDVNVSDALTFMAGDRNRAEAAYPGDIIGLHNHGTIRIGDTFTQGEKLRFTGVPNFAPEMFRRIRLKDPLKQKQLLKGLVQLSEEGAVQVFRPLDSNDLIVGAVGVLQFEVVVQRLKSEYKVEAIYEAISVATARWVYSKDAKKLEEFKRKCSNNLALDGGDNLTYVAPTMVNLNLSMERYPDIEFAKTREN.

Positions 9 to 277 (DKRRTFAIIS…GIVEWAPRPQ (269 aa)) constitute a tr-type G domain. GTP contacts are provided by residues 18-25 (SHPDAGKT), 86-90 (DTPGH), and 140-143 (NKLD).

It belongs to the TRAFAC class translation factor GTPase superfamily. Classic translation factor GTPase family. PrfC subfamily.

The protein resides in the cytoplasm. Its function is as follows. Increases the formation of ribosomal termination complexes and stimulates activities of RF-1 and RF-2. It binds guanine nucleotides and has strong preference for UGA stop codons. It may interact directly with the ribosome. The stimulation of RF-1 and RF-2 is significantly reduced by GTP and GDP, but not by GMP. The sequence is that of Peptide chain release factor 3 from Shewanella loihica (strain ATCC BAA-1088 / PV-4).